The sequence spans 132 residues: Peptide methionine sulfoxide reductase MsrB (132 aa).

In terms of domain architecture, MsrB spans 8–130; it reads LDSWREELTE…NSASLKLVPR (123 aa). The Zn(2+) site is built by Cys-47, Cys-50, Cys-96, and Cys-99. Cys-119 (nucleophile) is an active-site residue.

Belongs to the MsrB Met sulfoxide reductase family. The cofactor is Zn(2+).

The enzyme catalyses L-methionyl-[protein] + [thioredoxin]-disulfide + H2O = L-methionyl-(R)-S-oxide-[protein] + [thioredoxin]-dithiol. The polypeptide is Peptide methionine sulfoxide reductase MsrB (Pseudomonas paraeruginosa (strain DSM 24068 / PA7) (Pseudomonas aeruginosa (strain PA7))).